The sequence spans 1247 residues: uncharacterized protein (1247 aa).

8 disordered regions span residues 25–141 (KYNN…HSPP), 169–431 (AANN…QQPQ), 472–667 (QQQP…PSSS), 738–770 (NSNS…SEPI), 807–857 (YSNR…QNIE), 869–1087 (GKNF…NNNN), 1099–1122 (STLN…ESQQ), and 1139–1162 (QQQQ…KGDG). Low complexity predominate over residues 26–125 (YNNSNNYNNN…SNNSINSNSY (100 aa)). Residues 126-139 (KVNTPTQNGKSSHS) show a composition bias toward polar residues. Low complexity-rich tracts occupy residues 169-178 (AANNGSSNSS), 185-223 (SNSN…NYNS), and 230-341 (NNNN…YSNS). Residues 342-356 (KYNQQKSYNNAPHQL) show a composition bias toward polar residues. Low complexity-rich tracts occupy residues 363 to 375 (NSYY…NNGN), 385 to 394 (GSGNSSNSNG), 409 to 431 (QSQS…QQPQ), and 472 to 484 (QQQP…QQQQ). A compositionally biased stretch (polar residues) spans 511-522 (GLNNSLNGQTDL). Low complexity-rich tracts occupy residues 523-544 (NNSN…TNNN), 553-628 (YNYN…VGSN), 655-667 (TPSS…PSSS), 738-759 (NSNS…NNNH), 807-855 (YSNR…DSQN), and 871-928 (NFNN…ENNN). Positions 929–942 (GDVFSNGFSTWTPK) are enriched in polar residues. A compositionally biased stretch (low complexity) spans 943–983 (SGSNSLNNSQNNLSNGQNSSNNSQNNLNNSQNSLNSSGNHH). The span at 984–995 (SNYHGHNNHHHY) shows a compositional bias: basic residues. Positions 996–1021 (NNNNNNNNNNNNNNNNNNNNNNNGNG) are enriched in low complexity. A compositionally biased stretch (polar residues) spans 1026 to 1044 (YYNNKYQQKSPQHQSSNSV). The segment covering 1047 to 1060 (IPPPGFSTIAPPPG) has biased composition (pro residues). Over residues 1064-1087 (NNNNNNNNNNNNNNNKNNNSNNNN) the composition is skewed to low complexity. The span at 1099-1108 (STLNNSQDDS) shows a compositional bias: polar residues. Positions 1110 to 1122 (QQEQEQQEQESQQ) are enriched in low complexity.

This is an uncharacterized protein from Dictyostelium discoideum (Social amoeba).